The primary structure comprises 127 residues: Large ribosomal subunit protein bL20 (127 aa).

Belongs to the bacterial ribosomal protein bL20 family.

Its function is as follows. Binds directly to 23S ribosomal RNA and is necessary for the in vitro assembly process of the 50S ribosomal subunit. It is not involved in the protein synthesizing functions of that subunit. The polypeptide is Large ribosomal subunit protein bL20 (Bifidobacterium longum (strain DJO10A)).